The following is a 252-amino-acid chain: Geranylgeranylglyceryl phosphate synthase (252 aa).

Mg(2+)-binding residues include aspartate 26 and serine 55. Sn-glycerol 1-phosphate contacts are provided by residues 174 to 180 (YLEAGSG), 205 to 206 (GG), and 227 to 228 (GT).

The protein belongs to the GGGP/HepGP synthase family. Group II subfamily. Requires Mg(2+) as cofactor.

The protein localises to the cytoplasm. The enzyme catalyses sn-glycerol 1-phosphate + (2E,6E,10E)-geranylgeranyl diphosphate = sn-3-O-(geranylgeranyl)glycerol 1-phosphate + diphosphate. It participates in membrane lipid metabolism; glycerophospholipid metabolism. Its function is as follows. Prenyltransferase that catalyzes the transfer of the geranylgeranyl moiety of geranylgeranyl diphosphate (GGPP) to the C3 hydroxyl of sn-glycerol-1-phosphate (G1P). This reaction is the first ether-bond-formation step in the biosynthesis of archaeal membrane lipids. The chain is Geranylgeranylglyceryl phosphate synthase from Thermococcus gammatolerans (strain DSM 15229 / JCM 11827 / EJ3).